The following is a 273-amino-acid chain: Putative phosphoenolpyruvate synthase regulatory protein (273 aa).

153 to 160 is a binding site for ADP; that stretch reads GVSRSGKT.

The protein belongs to the pyruvate, phosphate/water dikinase regulatory protein family. PSRP subfamily.

The enzyme catalyses [pyruvate, water dikinase] + ADP = [pyruvate, water dikinase]-phosphate + AMP + H(+). The catalysed reaction is [pyruvate, water dikinase]-phosphate + phosphate + H(+) = [pyruvate, water dikinase] + diphosphate. Functionally, bifunctional serine/threonine kinase and phosphorylase involved in the regulation of the phosphoenolpyruvate synthase (PEPS) by catalyzing its phosphorylation/dephosphorylation. The chain is Putative phosphoenolpyruvate synthase regulatory protein from Paracidovorax citrulli (strain AAC00-1) (Acidovorax citrulli).